Consider the following 430-residue polypeptide: MDRISLLPDDVVFKILSFVPTKVVVSTNLLSKRWRYLWKHVPKLDYRDPSLVDTEHWRASRFVDKFLLLHEAPVLETLHLSLSRNCPPSDIETWISVAISRRVRNLHIYRYIPSTGPIRLPRSLYTCETLVSLYLLLDFTVDDAPFMFCFRSLKVLVLLFAKFSSDEIVNRLLSGCPVLEGLILIRRNDNVKNFTIAAPSLQRLIAIDCRSQVPGDDVGFVIKAPSLKSLTLLNFSPHSGFRSLVKMPDLVKASIKVRHGDSKMFMGCLTSTKRLALCLQPPLDSCPIGVFNQLVSLSLCTCSLGWCRLILNHTPKLRVLRFEQRQAKFYQLLDPLKRCCSSSVDVQTQWEQPSSVPKCLISSLETVEWIDYKGREVEKKVVMYLLENSRQLKTMAIRSLKSTNDNEKLKMLQELSSIHRICTKCGLSFT.

Residues 1–49 form the F-box domain; that stretch reads MDRISLLPDDVVFKILSFVPTKVVVSTNLLSKRWRYLWKHVPKLDYRDP. Residues 349–399 enclose the FBD domain; the sequence is QWEQPSSVPKCLISSLETVEWIDYKGREVEKKVVMYLLENSRQLKTMAIRS.

The polypeptide is Putative FBD-associated F-box protein At5g56440 (Arabidopsis thaliana (Mouse-ear cress)).